Here is a 159-residue protein sequence, read N- to C-terminus: MRIGQGFDVHAFCEGDSVILGGVTIPHSHGLMAHSDGDVLLHALADALLGAVALGDIGHFFPDSSEEWAGADSRDLLRRVMQRVLDEGYAVTNIDTTIIAQAPKMAPHIEAMRMNIAEDLGVPANRVSVKATTTEKLGFTGRGEGIACQAVCLLEAVSQ.

Residues Asp-8 and His-10 each contribute to the a divalent metal cation site. Residues 8 to 10 (DVH) and 34 to 35 (HS) contribute to the 4-CDP-2-C-methyl-D-erythritol 2-phosphate site. A divalent metal cation is bound at residue His-42. 4-CDP-2-C-methyl-D-erythritol 2-phosphate-binding positions include 56–58 (DIG), 100–106 (AQAPKMA), 132–135 (TTTE), Phe-139, and Arg-142.

Belongs to the IspF family. Homotrimer. The cofactor is a divalent metal cation.

The catalysed reaction is 4-CDP-2-C-methyl-D-erythritol 2-phosphate = 2-C-methyl-D-erythritol 2,4-cyclic diphosphate + CMP. It functions in the pathway isoprenoid biosynthesis; isopentenyl diphosphate biosynthesis via DXP pathway; isopentenyl diphosphate from 1-deoxy-D-xylulose 5-phosphate: step 4/6. Its function is as follows. Involved in the biosynthesis of isopentenyl diphosphate (IPP) and dimethylallyl diphosphate (DMAPP), two major building blocks of isoprenoid compounds. Catalyzes the conversion of 4-diphosphocytidyl-2-C-methyl-D-erythritol 2-phosphate (CDP-ME2P) to 2-C-methyl-D-erythritol 2,4-cyclodiphosphate (ME-CPP) with a corresponding release of cytidine 5-monophosphate (CMP). The protein is 2-C-methyl-D-erythritol 2,4-cyclodiphosphate synthase of Marinobacter nauticus (strain ATCC 700491 / DSM 11845 / VT8) (Marinobacter aquaeolei).